The chain runs to 323 residues: D-alanine--D-alanine ligase (323 aa).

Residues 121–317 (RIWFLTNNIN…FTNLIEEIIK (197 aa)) enclose the ATP-grasp domain. 147–199 (PMKRPYVIKPLAQGSSIGVEVIFAEDDFNFADYDFPYGDQVIIEQYIKGQGRE) contributes to the ATP binding site. Mg(2+) is bound by residues E270, E284, and N286.

It belongs to the D-alanine--D-alanine ligase family. It depends on Mg(2+) as a cofactor. Mn(2+) serves as cofactor.

The protein localises to the cytoplasm. It carries out the reaction 2 D-alanine + ATP = D-alanyl-D-alanine + ADP + phosphate + H(+). Its pathway is cell wall biogenesis; peptidoglycan biosynthesis. Its function is as follows. Cell wall formation. This is D-alanine--D-alanine ligase from Rickettsia peacockii (strain Rustic).